Here is a 25-residue protein sequence, read N- to C-terminus: Granule-bound starch synthase 1, chloroplastic/amyloplastic (25 aa).

Residue Lys-16 coordinates ADP-alpha-D-glucose.

The protein belongs to the glycosyltransferase 1 family. Bacterial/plant glycogen synthase subfamily. In terms of tissue distribution, expressed in endosperm.

The protein localises to the plastid. It is found in the chloroplast. It localises to the amyloplast. The enzyme catalyses an NDP-alpha-D-glucose + [(1-&gt;4)-alpha-D-glucosyl](n) = [(1-&gt;4)-alpha-D-glucosyl](n+1) + a ribonucleoside 5'-diphosphate + H(+). It participates in glycan biosynthesis; starch biosynthesis. Required for the synthesis of amylose in endosperm. The polypeptide is Granule-bound starch synthase 1, chloroplastic/amyloplastic (Fagopyrum esculentum (Common buckwheat)).